Consider the following 880-residue polypeptide: MADTTVEKLATEVGKSVERLIEQFSQAGIKKGQADNVTEAEKQQLLDYLKKQHGGENAPTKMTLQRKTVSTLSVAGNGGQSKDVKVEVRKTRTFVKRDANEATLKAEEEAKVEAEALAKAKAEAEAAAAVKAKAEADAKAKADAEAKAKAKAAAEVKVVKDMSPEAEAARLEAERLKAAQEAATKRKQDEEAAKAAETARLLAEEHSKRWAEEERQRLEAEKNGDHHITTSKVARAAEDTSDLDEEKRGRRARNKSNAKKRGGKDARDGREKHMRNRSTAPESMAHGFNKPVAAVSRDVRIGETVTVSELAHLMAVKATEIIKQMMKMGSMVTINQVLDQETAQMVAEEMGHKVVLIRENELEHQVLKDRDDEDGIKQESRAPVVTIMGHVDHGKTSLLDYIRRAKVAAGEAGGITQHIGAYHVETENGMITFLDTPGHAAFTAMRARGAKATDIVVLVVAADDGVMPQTIEAIQHAKAGNVPLIVAVNKMDKPEADIDRVKSELSQHGVMSEDWGGDNMFAFVSAKTGEGVDELLEGILLQAEVLELKAVRDGMAAGVVIESQLDKGRGPVATILVQEGTLRQGDIVLCGLEYGKIRAMKDENGRSITEAGPSIPVEILGLSGVPSAGDEATVVRDERKAREVALYRQGKFRDVKLARQQKSKLENMFANMTEGEVKELNIVLKADVQGSLEAITDSLTGLSTDEVKVNIIARGVGALTETDATLAAASNAILVGFNVRADAQARKTIDSESVDLRYYSVIYNLIDEVRAAMTGMLSPEFKQQIIGLAEVRDVFKSPKLGAIAGCMVTEGTIKRSAPIRVLRDNVVIYEGELESLRRFKDDVAEVRNGMECGIGVKNYNDVRVGDQIEVFETVEIARTL.

Basic and acidic residues-rich tracts occupy residues 180–194 and 202–228; these read QEAA…EAAK and LAEE…DHHI. The tract at residues 180–289 is disordered; that stretch reads QEAATKRKQD…APESMAHGFN (110 aa). Residues 249 to 262 are compositionally biased toward basic residues; the sequence is GRRARNKSNAKKRG. A tr-type G domain is found at 380-549; that stretch reads SRAPVVTIMG…LLQAEVLELK (170 aa). The tract at residues 389–396 is G1; sequence GHVDHGKT. 389–396 is a binding site for GTP; the sequence is GHVDHGKT. The interval 414–418 is G2; sequence GITQH. Positions 435 to 438 are G3; sequence DTPG. Residues 435 to 439 and 489 to 492 contribute to the GTP site; these read DTPGH and NKMD. A G4 region spans residues 489–492; that stretch reads NKMD. Residues 525–527 are G5; that stretch reads SAK.

It belongs to the TRAFAC class translation factor GTPase superfamily. Classic translation factor GTPase family. IF-2 subfamily.

The protein localises to the cytoplasm. Functionally, one of the essential components for the initiation of protein synthesis. Protects formylmethionyl-tRNA from spontaneous hydrolysis and promotes its binding to the 30S ribosomal subunits. Also involved in the hydrolysis of GTP during the formation of the 70S ribosomal complex. The polypeptide is Translation initiation factor IF-2 (Shewanella baltica (strain OS223)).